Consider the following 459-residue polypeptide: Interleukin-7 receptor subunit alpha (459 aa).

Residues 1 to 20 (MTILGTTFGVFFSLLQVVSG) form the signal peptide. Residues 21–241 (ESGYAQNGDL…NNHSGETNPT (221 aa)) are Extracellular-facing. Residues Cys42 and Cys57 are joined by a disulfide bond. N-linked (GlcNAc...) asparagine glycosylation is found at Asn49 and Asn65. 2 disulfides stabilise this stretch: Cys74/Cys82 and Cys108/Cys118. Residues 131-231 (APFDLSVIYR…PSYYFRTPEI (101 aa)) form the Fibronectin type-III domain. N-linked (GlcNAc...) asparagine glycosylation occurs at Asn182. The short motif at 217–221 (WSEWS) is the WSXWS motif element. Residues 242–262 (LLTISILSVLSVVLLVILACV) traverse the membrane as a helical segment. Over 263–459 (LWKKRIKPII…VTMSSFCQKR (197 aa)) the chain is Cytoplasmic. A Box 1 motif motif is present at residues 272–280 (IWPSLPDHK). Thr282 is modified (phosphothreonine; by PKC). The interval 327-357 (TVPPQLEESETQRPGGDVQSPSWPSENVVTT) is disordered. Residues 345–357 (QSPSWPSENVVTT) are compositionally biased toward polar residues.

This sequence belongs to the type I cytokine receptor family. Type 4 subfamily. As to quaternary structure, the IL7 receptor is a heterodimer of IL7R and IL2RG. The TSLP receptor is a heterodimer of CRLF2 and IL7R. Interacts with CD53. Post-translationally, N-glycosylated IL-7Ralpha binds IL7 300-fold more tightly than the unglycosylated form. Ubiquitinated by MARCHF8; leading to lysosomal degradation.

The protein localises to the cell membrane. In terms of biological role, receptor for interleukin-7. Also acts as a receptor for thymic stromal lymphopoietin (TSLP). The protein is Interleukin-7 receptor subunit alpha (IL7R) of Callithrix jacchus (White-tufted-ear marmoset).